We begin with the raw amino-acid sequence, 262 residues long: LysM domain-containing protein ARB_03438 (262 aa).

Positions 1-22 are cleaved as a signal peptide; it reads MVSIPLILGAIILLGTRKAATA. Residues 31-75 enclose the LysM 1 domain; sequence FAVTAATDDTCQSLGAQWGIGMAQFLKWNPGVNCNALVAGKTYCL. The segment at 85 to 112 is disordered; that stretch reads TASLTPSPQVPTTSRATQTMTSKASTGT. Over residues 86 to 112 the composition is skewed to polar residues; sequence ASLTPSPQVPTTSRATQTMTSKASTGT. One can recognise a LysM 2 domain in the interval 132–179; that stretch reads FYHPVSPGDTCQSIVDRYKAFTLDQFYTWNPSVGKNCESLWLGYYVCT. The interval 184-240 is disordered; the sequence is GPNSPSQQPPSQQPPSQQSPSQQSPSQQSPSQQPPSQQPPSQQPPSQQSNTSQQTQP. A compositionally biased stretch (low complexity) spans 197 to 214; that stretch reads PPSQQSPSQQSPSQQSPS. Positions 215–226 are enriched in pro residues; sequence QQPPSQQPPSQQ. The segment covering 227–240 has biased composition (low complexity); sequence PPSQQSNTSQQTQP. N233 is a glycosylation site (N-linked (GlcNAc...) asparagine).

It localises to the secreted. In terms of biological role, might have a role in sequestration of chitin oligosaccharides (breakdown products of fungal cell walls that are released during invasion and act as triggers of host immunity) to dampen host defense. This is LysM domain-containing protein ARB_03438 from Arthroderma benhamiae (strain ATCC MYA-4681 / CBS 112371) (Trichophyton mentagrophytes).